Consider the following 40-residue polypeptide: Large ribosomal subunit protein bL33c (40 aa).

Belongs to the bacterial ribosomal protein bL33 family.

It localises to the plastid. It is found in the chloroplast. The chain is Large ribosomal subunit protein bL33c (rpl33) from Pisum sativum (Garden pea).